We begin with the raw amino-acid sequence, 377 residues long: Geranylgeranyl transferase type-1 subunit beta (377 aa).

PFTB repeat units follow at residues 144-186 (KEAC…YMLN), 193-234 (MKKA…CLMG), 245-284 (LNRI…KLLK), and 291-333 (FEKN…SLME). Geranylgeranyl diphosphate contacts are provided by residues 219–221 (HGG) and 263–266 (RPNK). Positions 269 and 271 each coordinate Zn(2+). 272–275 (YSFW) is a binding site for geranylgeranyl diphosphate. H321 contacts Zn(2+).

It belongs to the protein prenyltransferase subunit beta family. Heterodimer of FNTA and PGGT1B. PGGT1B mediates interaction with substrate peptides. The cofactor is Zn(2+). Mg(2+) serves as cofactor.

The enzyme catalyses geranylgeranyl diphosphate + L-cysteinyl-[protein] = S-geranylgeranyl-L-cysteinyl-[protein] + diphosphate. Functionally, catalyzes the transfer of a geranylgeranyl moiety from geranylgeranyl diphosphate to a cysteine at the fourth position from the C-terminus of proteins with the C-terminal sequence Cys-aliphatic-aliphatic-X. Known substrates include RAC1, RAC2, RAP1A and RAP1B. This Rattus norvegicus (Rat) protein is Geranylgeranyl transferase type-1 subunit beta (Pggt1b).